A 190-amino-acid chain; its full sequence is uncharacterized protein (190 aa).

Disordered regions lie at residues methionine 1–glycine 21 and proline 155–serine 190. Over residues serine 181 to serine 190 the composition is skewed to low complexity.

This is an uncharacterized protein from Homo sapiens (Human).